The following is a 386-amino-acid chain: Outer membrane protein assembly factor BamB (386 aa).

A signal peptide spans 1-25 (MMRNSRPGRAWRGAVVLTGLLALSG). The N-palmitoyl cysteine moiety is linked to residue Cys-26. Cys-26 carries the S-diacylglycerol cysteine lipid modification.

Belongs to the BamB family. Part of the Bam complex.

The protein localises to the cell outer membrane. Part of the outer membrane protein assembly complex, which is involved in assembly and insertion of beta-barrel proteins into the outer membrane. The protein is Outer membrane protein assembly factor BamB of Bordetella pertussis (strain Tohama I / ATCC BAA-589 / NCTC 13251).